We begin with the raw amino-acid sequence, 884 residues long: Peroxidase-like protein 2 (884 aa).

Disordered stretches follow at residues 1–53 (TTSC…RTKG), 78–188 (VHSK…SQGA), 204–279 (EKET…DDDD), 653–695 (PEIP…SATQ), 710–744 (DLQPKAQDPTKLPGVPEYLQPKPKSSGLSTQGAVG), and 828–884 (VGGM…SDTK). The segment covering 17 to 29 (GTCNNVNKPTVGS) has biased composition (polar residues). The segment covering 32–53 (DKFKRDVKPQYDDKKGDPRTKG) has biased composition (basic and acidic residues). The span at 91 to 118 (KSSAVSPKMPSMGNLQSLGNLLSLGSVP) shows a compositional bias: low complexity. The segment covering 119–129 (VPAPAPAPEPV) has biased composition (pro residues). Basic residues-rich tracts occupy residues 160–172 (PKSKPKPKPKPKP) and 230–245 (RTPKKSPRKKARQSIF). Basic and acidic residues predominate over residues 246 to 267 (RRRDDRKDDRKGLRGTKGRRDD). The segment covering 268–279 (SDDNDDSDDDDD) has biased composition (acidic residues). The span at 828–856 (VGGMGGSVGVGGSVGSGGSGGSRGAGGSG) shows a compositional bias: gly residues. Residues 865–884 (DDSKCSDDEKQKYCKNSDTK) are compositionally biased toward basic and acidic residues.

It belongs to the peroxidase family. As to expression, component of the acid-insoluble and acid-soluble organic matrix of calcified layers of the shell (at protein level).

The protein resides in the secreted. In Lottia gigantea (Giant owl limpet), this protein is Peroxidase-like protein 2.